A 593-amino-acid polypeptide reads, in one-letter code: Inactive metallocarboxypeptidase ECM14 (593 aa).

The signal sequence occupies residues 1–22 (MHFSVRLSLLLTLASSLPLVSA). The propeptide occupies 23 to 184 (IPQHEDQAYT…QTIYESYPKT (162 aa)). A disordered region spans residues 180–210 (SYPKTNPSSPSQQGPTTRRFSPSASTSKTKP). Over residues 182 to 210 (PKTNPSSPSQQGPTTRRFSPSASTSKTKP) the composition is skewed to polar residues. The region spanning 220 to 546 (DYQPLSVLLP…RAMVAMGKFL (327 aa)) is the Peptidase M14 domain. Residues H285 and E288 each coordinate Zn(2+). Residues 285-288 (HARE), R343, and 360-361 (DH) each bind substrate. C354 and C377 are disulfide-bonded. N370 carries N-linked (GlcNAc...) asparagine glycosylation. Residue H417 coordinates Zn(2+). Residue 418–419 (SY) coordinates substrate. Residues 557–593 (NGPHAAEETQNYDDDFEEDEAEEDSDVFRAQGDDMSS) form a disordered region. Acidic residues predominate over residues 566 to 581 (QNYDDDFEEDEAEEDS).

Belongs to the peptidase M14 family. The cofactor is Zn(2+).

It is found in the vacuole. It localises to the secreted. Its function is as follows. Inactive carboxypeptidase that may play a role in cell wall organization and biogenesis. The protein is Inactive metallocarboxypeptidase ECM14 (ECM14) of Arthroderma gypseum (strain ATCC MYA-4604 / CBS 118893) (Microsporum gypseum).